A 248-amino-acid polypeptide reads, in one-letter code: 5'-nucleotidase SurE (248 aa).

Residues D8, D9, S39, and N91 each coordinate a divalent metal cation.

Belongs to the SurE nucleotidase family. A divalent metal cation serves as cofactor.

Its subcellular location is the cytoplasm. It catalyses the reaction a ribonucleoside 5'-phosphate + H2O = a ribonucleoside + phosphate. In terms of biological role, nucleotidase that shows phosphatase activity on nucleoside 5'-monophosphates. The protein is 5'-nucleotidase SurE of Pseudoalteromonas atlantica (strain T6c / ATCC BAA-1087).